Consider the following 391-residue polypeptide: 3-ketoacyl-CoA thiolase (391 aa).

Catalysis depends on cysteine 95, which acts as the Acyl-thioester intermediate. Active-site proton acceptor residues include histidine 347 and cysteine 377.

This sequence belongs to the thiolase-like superfamily. Thiolase family. In terms of assembly, heterotetramer of two alpha chains (FadB) and two beta chains (FadA).

It localises to the cytoplasm. It catalyses the reaction an acyl-CoA + acetyl-CoA = a 3-oxoacyl-CoA + CoA. Its pathway is lipid metabolism; fatty acid beta-oxidation. Functionally, catalyzes the final step of fatty acid oxidation in which acetyl-CoA is released and the CoA ester of a fatty acid two carbons shorter is formed. The chain is 3-ketoacyl-CoA thiolase from Marinobacter nauticus (strain ATCC 700491 / DSM 11845 / VT8) (Marinobacter aquaeolei).